The sequence spans 309 residues: Glutaminase 2 (309 aa).

Positions 65, 117, 162, 169, 193, 245, and 263 each coordinate substrate.

This sequence belongs to the glutaminase family. As to quaternary structure, homotetramer.

It catalyses the reaction L-glutamine + H2O = L-glutamate + NH4(+). The polypeptide is Glutaminase 2 (Bacillus subtilis (strain 168)).